Here is a 312-residue protein sequence, read N- to C-terminus: Olfactory receptor 1D5 (312 aa).

Topologically, residues 1–25 are extracellular; that stretch reads MDGDNQSENSQFLLLGISESPEQQQ. N5 carries N-linked (GlcNAc...) asparagine glycosylation. A helical membrane pass occupies residues 26 to 49; it reads ILFWMFLSMYLVTVLGNVLIILAI. At 50–57 the chain is on the cytoplasmic side; the sequence is SSDSHLHT. The chain crosses the membrane as a helical span at residues 58 to 79; that stretch reads PMYFFLANLSFTDLFFVTNTIP. The Extracellular segment spans residues 80 to 100; it reads KMLVNFQSQNKAISYAGCLTQ. Residues C97 and C189 are joined by a disulfide bond. A helical transmembrane segment spans residues 101 to 120; it reads LYFLVSLVTLDNLILAVMAY. Over 121-140 the chain is Cytoplasmic; it reads DRYVAICCPLHYVTAMSPGL. The helical transmembrane segment at 141–158 threads the bilayer; that stretch reads CVLLLSLCWGLSVLYGLL. Topologically, residues 159–196 are extracellular; it reads LTLLLTRVTFCGPREIHYLFCDMYILLRLACSNTHIIH. A helical transmembrane segment spans residues 197-220; that stretch reads TVLVATGCFIFLTPLGFMTTSYVC. At 221-237 the chain is on the cytoplasmic side; sequence IVRTILQIPSASKKYKA. Residues 238-260 traverse the membrane as a helical segment; it reads FSTCASHLGVVSLFYGTLAMVYL. At 261 to 271 the chain is on the extracellular side; that stretch reads QPLHTYSMKDS. The helical transmembrane segment at 272 to 291 threads the bilayer; that stretch reads VATVMYAVVTPMMNPFIYSL. The Cytoplasmic segment spans residues 292-312; sequence RNKDMHGALGRVLRRLFQRPK.

The protein belongs to the G-protein coupled receptor 1 family.

It is found in the cell membrane. Its function is as follows. Odorant receptor. This Pan paniscus (Pygmy chimpanzee) protein is Olfactory receptor 1D5 (OR1D5).